A 460-amino-acid chain; its full sequence is MAPPGILNRYLLLMAQEHLEFRLPEIKSLLSLFGGQFISSQETYGKSPFWILSIPSEDIARNLMKRTVCAKSIFELWGHGKCPEELYSSLKNYPVEKMVPFLHSDSTYKIKIHTFNKTLTQEEKVKRIDALEFLPFEGKVNLKKPQHVFSILEDYGLDPNHIPENPHNIYFGRWIADGQRELIESYSVKKRHFIGNTSMDAGLSFIMANHGKVKKNDIVFDPFVGTGGLLIASAHFGAYVYGTDIDYNTVHGLGKASRKNQKWRGPDENIRANLRQYGLEKYYLDVLVSDASKPSWRKGTYFDAIITDPPYGIRESTRRTGSQKEIPKGIEKCPESHVPVSLSYHLSDMFFDLLNFSAETLVLGGRLVYWLPVYTPEYTEEMVPWHPCLKLISNCEQKLSSHTSRRLITMEKVKEFENRDQYSHLLSDHFLLYQGHNSFREKYFSGVTKRIAKEEKSSQE.

Residue Ala2 is modified to N-acetylalanine.

This sequence belongs to the class I-like SAM-binding methyltransferase superfamily. TRM11 methyltransferase family. Part of the heterodimeric TRMT11-TRM112 methyltransferase complex; this complex forms an active tRNA methyltransferase, where TRMT112 acts as an activator of the catalytic subunit TRMT11.

The protein localises to the cytoplasm. It catalyses the reaction guanosine(10) in tRNA + S-adenosyl-L-methionine = N(2)-methylguanosine(10) in tRNA + S-adenosyl-L-homocysteine + H(+). Catalytic subunit of the TRMT11-TRM112 methyltransferase complex, that specifically mediates the S-adenosyl-L-methionine-dependent N(2)-methylation of guanosine nucleotide at position 10 (m2G10) in tRNAs. This is one of the major tRNA (guanine-N(2))-methyltransferases. The protein is tRNA (guanine(10)-N(2))-methyltransferase TRMT11 of Bos taurus (Bovine).